The following is a 551-amino-acid chain: ATPase expression protein 2, mitochondrial (551 aa).

Positions 530 to 551 are disordered; it reads AQKAQKRFDDEEEDSMLLGRLW.

Belongs to the AEP2 family. In terms of assembly, binds to the 5'UTR of the OLI1 mRNA.

It localises to the mitochondrion. In terms of biological role, required for translation of the mitochondrial OLI1 transcript coding for the mitochondrial ATP synthase subunit 9. This is ATPase expression protein 2, mitochondrial (AEP2) from Lachancea thermotolerans (strain ATCC 56472 / CBS 6340 / NRRL Y-8284) (Yeast).